The sequence spans 190 residues: Large ribosomal subunit protein uL6 (190 aa).

The protein belongs to the universal ribosomal protein uL6 family.

The sequence is that of Large ribosomal subunit protein uL6 (RpL9) from Drosophila melanogaster (Fruit fly).